Here is a 120-residue protein sequence, read N- to C-terminus: C-C motif chemokine 27 (120 aa).

The first 25 residues, 1–25 (MMEGLSPASSLPLLLLLLSPAPEAA), serve as a signal peptide directing secretion. Cystine bridges form between Cys-34-Cys-63 and Cys-35-Cys-78.

This sequence belongs to the intercrine beta (chemokine CC) family. As to quaternary structure, monomer, dimer, and tetramer. Heparin avidly promotes oligomerization. Interacts with TNFAIP6 (via Link domain). As to expression, isoform 1 is predominantly expressed in placenta and weakly in skin. Isoform 2 is predominantly expressed in testes and brain, weakly in kidney and liver and even lower in heart and muscle. Low expression of both isoforms in other tissues.

It is found in the secreted. The protein localises to the nucleus. In terms of biological role, chemotactic factor that attracts skin-associated memory T-lymphocytes. May play a role in mediating homing of lymphocytes to cutaneous sites. May play a role in cell migration during embryogenesis. Nuclear forms may facilitate cellular migration by inducing cytoskeletal relaxation. Binds to CCR10. This chain is C-C motif chemokine 27 (Ccl27), found in Mus musculus (Mouse).